A 124-amino-acid chain; its full sequence is uncharacterized protein (124 aa).

It is found in the plastid. The protein localises to the chloroplast. This is an uncharacterized protein from Chlamydomonas reinhardtii (Chlamydomonas smithii).